A 206-amino-acid polypeptide reads, in one-letter code: MELKLLQDNGQVGAGVAASPEVFGRDYNEALVHQIVVAYQANARSGNRKQKDREEVKHTTKKPWRQKGTGRARAGMSSSPLWRGGGRIFPNSPEENFSQKVNKKMFRAGMRSIYSQLAREGRINVVDGFTVDAPKTKLLADKFKAMGLDSVLIITDSLDENLYLASRNLPHVAVVEPRQADPLSLVHYKKVLVTKAAVAQIEELLK.

Residues 43 to 78 (ARSGNRKQKDREEVKHTTKKPWRQKGTGRARAGMSS) form a disordered region. The span at 49-58 (KQKDREEVKH) shows a compositional bias: basic and acidic residues. The span at 59–70 (TTKKPWRQKGTG) shows a compositional bias: basic residues.

It belongs to the universal ribosomal protein uL4 family. As to quaternary structure, part of the 50S ribosomal subunit.

One of the primary rRNA binding proteins, this protein initially binds near the 5'-end of the 23S rRNA. It is important during the early stages of 50S assembly. It makes multiple contacts with different domains of the 23S rRNA in the assembled 50S subunit and ribosome. Its function is as follows. Forms part of the polypeptide exit tunnel. The protein is Large ribosomal subunit protein uL4 of Cupriavidus pinatubonensis (strain JMP 134 / LMG 1197) (Cupriavidus necator (strain JMP 134)).